The primary structure comprises 419 residues: UDP-N-acetylglucosamine 1-carboxyvinyltransferase (419 aa).

22 to 23 (KN) is a phosphoenolpyruvate binding site. Arg95 provides a ligand contact to UDP-N-acetyl-alpha-D-glucosamine. The Proton donor role is filled by Cys119. Position 119 is a 2-(S-cysteinyl)pyruvic acid O-phosphothioketal (Cys119). UDP-N-acetyl-alpha-D-glucosamine contacts are provided by residues 164–167 (KVSV), Asp308, and Ile330.

This sequence belongs to the EPSP synthase family. MurA subfamily.

It is found in the cytoplasm. It catalyses the reaction phosphoenolpyruvate + UDP-N-acetyl-alpha-D-glucosamine = UDP-N-acetyl-3-O-(1-carboxyvinyl)-alpha-D-glucosamine + phosphate. It participates in cell wall biogenesis; peptidoglycan biosynthesis. Functionally, cell wall formation. Adds enolpyruvyl to UDP-N-acetylglucosamine. This is UDP-N-acetylglucosamine 1-carboxyvinyltransferase from Rickettsia africae (strain ESF-5).